The following is a 541-amino-acid chain: uncharacterized protein (541 aa).

A run of 5 helical transmembrane segments spans residues F4–G23, F30–V47, V57–A79, L91–N113, and L156–A178. RCK C-terminal domains are found at residues Q187–D271 and L273–D354. A run of 5 helical transmembrane segments spans residues F362 to L384, A389 to S411, L424 to F446, L456 to Y478, and L516 to F538.

Belongs to the AAE transporter (TC 2.A.81) family.

Its subcellular location is the cell membrane. This is an uncharacterized protein from Corynebacterium diphtheriae (strain ATCC 700971 / NCTC 13129 / Biotype gravis).